The sequence spans 100 residues: Large ribosomal subunit protein uL23 (100 aa).

Belongs to the universal ribosomal protein uL23 family. In terms of assembly, part of the 50S ribosomal subunit. Contacts protein L29, and trigger factor when it is bound to the ribosome.

One of the early assembly proteins it binds 23S rRNA. One of the proteins that surrounds the polypeptide exit tunnel on the outside of the ribosome. Forms the main docking site for trigger factor binding to the ribosome. This Mycolicibacterium gilvum (strain PYR-GCK) (Mycobacterium gilvum (strain PYR-GCK)) protein is Large ribosomal subunit protein uL23.